A 229-amino-acid polypeptide reads, in one-letter code: Cytochrome c oxidase subunit 2 (229 aa).

Residues M1–H26 are Mitochondrial intermembrane-facing. A helical membrane pass occupies residues A27–N48. At S49–E62 the chain is on the mitochondrial matrix side. A helical transmembrane segment spans residues M63 to R82. The Mitochondrial intermembrane portion of the chain corresponds to L83 to S229. Residues H161, C196, E198, C200, H204, and M207 each coordinate Cu cation. Residue E198 coordinates Mg(2+).

This sequence belongs to the cytochrome c oxidase subunit 2 family. As to quaternary structure, component of the cytochrome c oxidase (complex IV, CIV), a multisubunit enzyme composed of a catalytic core of 3 subunits and several supernumerary subunits. The complex exists as a monomer or a dimer and forms supercomplexes (SCs) in the inner mitochondrial membrane with ubiquinol-cytochrome c oxidoreductase (cytochrome b-c1 complex, complex III, CIII). Requires Cu cation as cofactor.

The protein resides in the mitochondrion inner membrane. It carries out the reaction 4 Fe(II)-[cytochrome c] + O2 + 8 H(+)(in) = 4 Fe(III)-[cytochrome c] + 2 H2O + 4 H(+)(out). In terms of biological role, component of the cytochrome c oxidase, the last enzyme in the mitochondrial electron transport chain which drives oxidative phosphorylation. The respiratory chain contains 3 multisubunit complexes succinate dehydrogenase (complex II, CII), ubiquinol-cytochrome c oxidoreductase (cytochrome b-c1 complex, complex III, CIII) and cytochrome c oxidase (complex IV, CIV), that cooperate to transfer electrons derived from NADH and succinate to molecular oxygen, creating an electrochemical gradient over the inner membrane that drives transmembrane transport and the ATP synthase. Cytochrome c oxidase is the component of the respiratory chain that catalyzes the reduction of oxygen to water. Electrons originating from reduced cytochrome c in the intermembrane space (IMS) are transferred via the dinuclear copper A center (CU(A)) of subunit 2 and heme A of subunit 1 to the active site in subunit 1, a binuclear center (BNC) formed by heme A3 and copper B (CU(B)). The BNC reduces molecular oxygen to 2 water molecules using 4 electrons from cytochrome c in the IMS and 4 protons from the mitochondrial matrix. The sequence is that of Cytochrome c oxidase subunit 2 (mt:CoII) from Drosophila affinis (Fruit fly).